Consider the following 195-residue polypeptide: Matrix protein (195 aa).

It belongs to the novirhabdovirus matrix protein family. In terms of assembly, homomultimer.

Its subcellular location is the virion. The protein localises to the host cytoplasm. Its function is as follows. The M protein has a crucial role in virus assembly and interacts with the RNP complex as well as with the viral membrane. The sequence is that of Matrix protein (M) from Salmo (IHNV).